The sequence spans 319 residues: Ribonuclease Z (319 aa).

Residues His62, His64, Asp66, His67, His145, Asp215, and His273 each coordinate Zn(2+). The active-site Proton acceptor is the Asp66.

Belongs to the RNase Z family. In terms of assembly, homodimer. Zn(2+) serves as cofactor.

The enzyme catalyses Endonucleolytic cleavage of RNA, removing extra 3' nucleotides from tRNA precursor, generating 3' termini of tRNAs. A 3'-hydroxy group is left at the tRNA terminus and a 5'-phosphoryl group is left at the trailer molecule.. Zinc phosphodiesterase, which displays some tRNA 3'-processing endonuclease activity. Probably involved in tRNA maturation, by removing a 3'-trailer from precursor tRNA. This chain is Ribonuclease Z, found in Borreliella afzelii (strain PKo) (Borrelia afzelii).